The chain runs to 421 residues: Histidine--tRNA ligase (421 aa).

This sequence belongs to the class-II aminoacyl-tRNA synthetase family. Homodimer.

The protein localises to the cytoplasm. It carries out the reaction tRNA(His) + L-histidine + ATP = L-histidyl-tRNA(His) + AMP + diphosphate + H(+). The polypeptide is Histidine--tRNA ligase (Ureaplasma urealyticum serovar 10 (strain ATCC 33699 / Western)).